Here is a 965-residue protein sequence, read N- to C-terminus: Receptor-like protein 15 (965 aa).

The first 23 residues, Met1 to Gly23, serve as a signal peptide directing secretion. The Extracellular segment spans residues Tyr24–Asp916. 4 N-linked (GlcNAc...) asparagine glycosylation sites follow: Asn57, Asn95, Asn109, and Asn145. LRR repeat units lie at residues Glu80 to Phe102, Glu103 to Ser127, Leu131 to Ala154, Thr156 to Asp179, Leu180 to Ser204, Arg206 to Thr230, Leu243 to Leu267, Thr268 to Ser290, Gln292 to Asn315, Leu316 to Pro341, Lys342 to Gln365, Lys366 to Asn389, Thr391 to Leu415, Phe417 to Trp435, Phe437 to Met461, Asn462 to Gly485, and Tyr487 to Asn512. Asn194 carries an N-linked (GlcNAc...) asparagine glycan. A glycan (N-linked (GlcNAc...) asparagine) is linked at Asn315. Residues Asn377 and Asn389 are each glycosylated (N-linked (GlcNAc...) asparagine). Residue Asn444 is glycosylated (N-linked (GlcNAc...) asparagine). N-linked (GlcNAc...) asparagine glycosylation occurs at Asn509. An LRR 18; degenerate repeat occupies Leu514–Ser533. LRR repeat units follow at residues Leu534–Glu557, Leu558–Lys582, Ser584–Arg606, Gly608–Leu627, Ala628–Asn652, Ser654–Leu674, Ser675–Thr698, Leu778–Gly801, Leu802–Ser825, Glu827–Leu850, and Thr851–Thr875. Residues Asn546 and Asn581 are each glycosylated (N-linked (GlcNAc...) asparagine). 4 N-linked (GlcNAc...) asparagine glycosylation sites follow: Asn652, Asn662, Asn688, and Asn697. Residues Asn809 and Asn814 are each glycosylated (N-linked (GlcNAc...) asparagine). 3 N-linked (GlcNAc...) asparagine glycosylation sites follow: Asn862, Asn893, and Asn898. The helical transmembrane segment at Met917–Ala937 threads the bilayer. Topologically, residues Ser938–Leu965 are cytoplasmic.

It belongs to the RLP family.

The protein resides in the cell membrane. This is Receptor-like protein 15 from Arabidopsis thaliana (Mouse-ear cress).